A 142-amino-acid chain; its full sequence is Transcription antitermination protein NusB (142 aa).

The protein belongs to the NusB family.

Functionally, involved in transcription antitermination. Required for transcription of ribosomal RNA (rRNA) genes. Binds specifically to the boxA antiterminator sequence of the ribosomal RNA (rrn) operons. This is Transcription antitermination protein NusB from Anaeromyxobacter dehalogenans (strain 2CP-1 / ATCC BAA-258).